A 216-amino-acid polypeptide reads, in one-letter code: Ras-related protein Rab-11A (216 aa).

N-acetylglycine is present on Gly2. GTP contacts are provided by Ser20, Gly21, Val22, Gly23, Lys24, Ser25, Asn26, Asn37, Leu38, Ser40, Ser42, and Thr43. Ser25 contributes to the Mg(2+) binding site. A Switch 1 motif is present at residues 36–47 (FNLESKSTIGVE). Mg(2+) is bound by residues Thr43 and Asp66. Positions 67-86 (TAGQERYRAITSAYYRGAVG) match the Switch 2 motif. Residues Gly69, Asn124, Lys125, Asp127, Ala155, and Leu156 each contribute to the GTP site. The tract at residues 183 to 208 (DRRENDMSPSNNVVPIHVPPTTENKP) is disordered. Residues Cys212 and Cys213 are each lipidated (S-geranylgeranyl cysteine). Residue Cys213 is modified to Cysteine methyl ester. Residues 214-216 (QNI) constitute a propeptide, removed in mature form.

It belongs to the small GTPase superfamily. Rab family. The cofactor is Mg(2+).

The protein localises to the cell membrane. Its subcellular location is the endosome membrane. It is found in the recycling endosome membrane. The protein resides in the cleavage furrow. It localises to the cytoplasmic vesicle. The protein localises to the phagosome. Its subcellular location is the cytoplasmic vesicle membrane. It is found in the golgi apparatus. The protein resides in the trans-Golgi network. It carries out the reaction GTP + H2O = GDP + phosphate + H(+). With respect to regulation, regulated by guanine nucleotide exchange factors (GEFs) which promote the exchange of bound GDP for free GTP. Regulated by GTPase activating proteins (GAPs) which increase the GTP hydrolysis activity. Inhibited by GDP dissociation inhibitors (GDIs) which prevent Rab-GDP dissociation. Its function is as follows. The small GTPases Rab are key regulators of intracellular membrane trafficking, from the formation of transport vesicles to their fusion with membranes. Rabs cycle between an inactive GDP-bound form and an active GTP-bound form that is able to recruit to membranes different set of downstream effectors directly responsible for vesicle formation, movement, tethering and fusion. The small Rab GTPase RAB11A regulates endocytic recycling. May also be involved in the regulation of preciliary trafficking and neosynthesized protein export. The sequence is that of Ras-related protein Rab-11A (RAB11A) from Gallus gallus (Chicken).